The following is an 84-amino-acid chain: Beta-cardiotoxin CTX9 (84 aa).

The first 21 residues, 1 to 21 (MKTLLLTLVVVTIVCLDLGYT), serve as a signal peptide directing secretion. Cystine bridges form between Cys-24-Cys-43, Cys-36-Cys-61, Cys-65-Cys-76, and Cys-77-Cys-82.

This sequence belongs to the three-finger toxin family. Short-chain subfamily. Aminergic toxin sub-subfamily. As to expression, expressed by the venom gland.

It localises to the secreted. Acts as a beta-blocker by binding to beta-1 and beta-2 adrenergic receptors (ADRB1 and ADRB2). It dose-dependently decreases the heart rate (bradycardia), whereas conventional cardiotoxins increases it. At 100 mg/kg, intraperitoneal injection into mice provokes labored breathing, impaired locomotion, lack of response to external stimuli, and death (after 30 minutes). The chain is Beta-cardiotoxin CTX9 from Ophiophagus hannah (King cobra).